Consider the following 219-residue polypeptide: Chloramphenicol acetyltransferase (219 aa).

Residue His193 is the Proton acceptor of the active site.

Belongs to the chloramphenicol acetyltransferase family. Homotrimer.

The catalysed reaction is chloramphenicol + acetyl-CoA = chloramphenicol 3-acetate + CoA. Functionally, this enzyme is an effector of chloramphenicol resistance in bacteria. The sequence is that of Chloramphenicol acetyltransferase (cat) from Klebsiella sp.